Consider the following 324-residue polypeptide: Lipoyl synthase (324 aa).

Cys72, Cys77, Cys83, Cys98, Cys102, Cys105, and Ser313 together coordinate [4Fe-4S] cluster. The 219-residue stretch at 84–302 (FRFGTASFMI…AQEGKKMGFL (219 aa)) folds into the Radical SAM core domain.

This sequence belongs to the radical SAM superfamily. Lipoyl synthase family. [4Fe-4S] cluster is required as a cofactor.

The protein localises to the cytoplasm. It catalyses the reaction [[Fe-S] cluster scaffold protein carrying a second [4Fe-4S](2+) cluster] + N(6)-octanoyl-L-lysyl-[protein] + 2 oxidized [2Fe-2S]-[ferredoxin] + 2 S-adenosyl-L-methionine + 4 H(+) = [[Fe-S] cluster scaffold protein] + N(6)-[(R)-dihydrolipoyl]-L-lysyl-[protein] + 4 Fe(3+) + 2 hydrogen sulfide + 2 5'-deoxyadenosine + 2 L-methionine + 2 reduced [2Fe-2S]-[ferredoxin]. It functions in the pathway protein modification; protein lipoylation via endogenous pathway; protein N(6)-(lipoyl)lysine from octanoyl-[acyl-carrier-protein]: step 2/2. Its function is as follows. Catalyzes the radical-mediated insertion of two sulfur atoms into the C-6 and C-8 positions of the octanoyl moiety bound to the lipoyl domains of lipoate-dependent enzymes, thereby converting the octanoylated domains into lipoylated derivatives. In Dichelobacter nodosus (strain VCS1703A), this protein is Lipoyl synthase.